Here is a 306-residue protein sequence, read N- to C-terminus: Pantothenate kinase (306 aa).

ATP is bound at residue 91-98 (GSVAVGKS).

It belongs to the prokaryotic pantothenate kinase family.

It is found in the cytoplasm. It carries out the reaction (R)-pantothenate + ATP = (R)-4'-phosphopantothenate + ADP + H(+). It participates in cofactor biosynthesis; coenzyme A biosynthesis; CoA from (R)-pantothenate: step 1/5. The polypeptide is Pantothenate kinase (Streptococcus suis (strain 05ZYH33)).